The following is a 333-amino-acid chain: 4-hydroxy-3-methylbut-2-enyl diphosphate reductase (333 aa).

Residue Cys-33 participates in [4Fe-4S] cluster binding. Positions 62 and 95 each coordinate (2E)-4-hydroxy-3-methylbut-2-enyl diphosphate. Dimethylallyl diphosphate contacts are provided by His-62 and His-95. 2 residues coordinate isopentenyl diphosphate: His-62 and His-95. Position 117 (Cys-117) interacts with [4Fe-4S] cluster. A (2E)-4-hydroxy-3-methylbut-2-enyl diphosphate-binding site is contributed by His-145. His-145 contacts dimethylallyl diphosphate. Residue His-145 coordinates isopentenyl diphosphate. The active-site Proton donor is Glu-147. Thr-186 is a binding site for (2E)-4-hydroxy-3-methylbut-2-enyl diphosphate. Cys-216 contributes to the [4Fe-4S] cluster binding site. 4 residues coordinate (2E)-4-hydroxy-3-methylbut-2-enyl diphosphate: Ser-244, Ser-245, Asn-246, and Ser-289. Dimethylallyl diphosphate is bound by residues Ser-244, Ser-245, Asn-246, and Ser-289. Residues Ser-244, Ser-245, Asn-246, and Ser-289 each contribute to the isopentenyl diphosphate site.

It belongs to the IspH family. It depends on [4Fe-4S] cluster as a cofactor.

The catalysed reaction is isopentenyl diphosphate + 2 oxidized [2Fe-2S]-[ferredoxin] + H2O = (2E)-4-hydroxy-3-methylbut-2-enyl diphosphate + 2 reduced [2Fe-2S]-[ferredoxin] + 2 H(+). It carries out the reaction dimethylallyl diphosphate + 2 oxidized [2Fe-2S]-[ferredoxin] + H2O = (2E)-4-hydroxy-3-methylbut-2-enyl diphosphate + 2 reduced [2Fe-2S]-[ferredoxin] + 2 H(+). The protein operates within isoprenoid biosynthesis; dimethylallyl diphosphate biosynthesis; dimethylallyl diphosphate from (2E)-4-hydroxy-3-methylbutenyl diphosphate: step 1/1. It participates in isoprenoid biosynthesis; isopentenyl diphosphate biosynthesis via DXP pathway; isopentenyl diphosphate from 1-deoxy-D-xylulose 5-phosphate: step 6/6. Its function is as follows. Catalyzes the conversion of 1-hydroxy-2-methyl-2-(E)-butenyl 4-diphosphate (HMBPP) into a mixture of isopentenyl diphosphate (IPP) and dimethylallyl diphosphate (DMAPP). Acts in the terminal step of the DOXP/MEP pathway for isoprenoid precursor biosynthesis. This Corynebacterium diphtheriae (strain ATCC 700971 / NCTC 13129 / Biotype gravis) protein is 4-hydroxy-3-methylbut-2-enyl diphosphate reductase.